The primary structure comprises 162 residues: Phosphopantetheine adenylyltransferase (162 aa).

Residue S9 coordinates substrate. ATP contacts are provided by residues 9 to 10 (SF) and H17. Residues K41, T73, and R87 each coordinate substrate. Residues 88–90 (GLR), E98, and 123–129 (YSFISSS) each bind ATP.

This sequence belongs to the bacterial CoaD family. Homohexamer. The cofactor is Mg(2+).

It is found in the cytoplasm. It catalyses the reaction (R)-4'-phosphopantetheine + ATP + H(+) = 3'-dephospho-CoA + diphosphate. It functions in the pathway cofactor biosynthesis; coenzyme A biosynthesis; CoA from (R)-pantothenate: step 4/5. In terms of biological role, reversibly transfers an adenylyl group from ATP to 4'-phosphopantetheine, yielding dephospho-CoA (dPCoA) and pyrophosphate. The chain is Phosphopantetheine adenylyltransferase from Carboxydothermus hydrogenoformans (strain ATCC BAA-161 / DSM 6008 / Z-2901).